The chain runs to 218 residues: Ribonuclease HII (218 aa).

Positions 24–218 constitute an RNase H type-2 domain; the sequence is ESIAGVDEVG…KLFAVNGSLT (195 aa). Residues Asp-30, Glu-31, and Asp-126 each coordinate a divalent metal cation.

Belongs to the RNase HII family. Mn(2+) serves as cofactor. The cofactor is Mg(2+).

Its subcellular location is the cytoplasm. The catalysed reaction is Endonucleolytic cleavage to 5'-phosphomonoester.. Endonuclease that specifically degrades the RNA of RNA-DNA hybrids. This chain is Ribonuclease HII, found in Prochlorococcus marinus (strain MIT 9313).